The following is a 288-amino-acid chain: ATP synthase gamma chain (288 aa).

Belongs to the ATPase gamma chain family. As to quaternary structure, F-type ATPases have 2 components, CF(1) - the catalytic core - and CF(0) - the membrane proton channel. CF(1) has five subunits: alpha(3), beta(3), gamma(1), delta(1), epsilon(1). CF(0) has three main subunits: a, b and c.

It is found in the cell inner membrane. In terms of biological role, produces ATP from ADP in the presence of a proton gradient across the membrane. The gamma chain is believed to be important in regulating ATPase activity and the flow of protons through the CF(0) complex. The sequence is that of ATP synthase gamma chain from Rickettsia canadensis (strain McKiel).